A 124-amino-acid polypeptide reads, in one-letter code: Small ribosomal subunit protein uS12 (124 aa).

A 3-methylthioaspartic acid modification is found at D89.

This sequence belongs to the universal ribosomal protein uS12 family. As to quaternary structure, part of the 30S ribosomal subunit. Contacts proteins S8 and S17. May interact with IF1 in the 30S initiation complex.

In terms of biological role, with S4 and S5 plays an important role in translational accuracy. Its function is as follows. Interacts with and stabilizes bases of the 16S rRNA that are involved in tRNA selection in the A site and with the mRNA backbone. Located at the interface of the 30S and 50S subunits, it traverses the body of the 30S subunit contacting proteins on the other side and probably holding the rRNA structure together. The combined cluster of proteins S8, S12 and S17 appears to hold together the shoulder and platform of the 30S subunit. The chain is Small ribosomal subunit protein uS12 from Moorella thermoacetica (strain ATCC 39073 / JCM 9320).